Here is a 169-residue protein sequence, read N- to C-terminus: MIILGIDPGIAIVGYGIIEYKNSKFKAIDYGAVTTPAHMNISRRLELVYKGIDTIVKNYNIDEVGMEELFFNKNVKTAITVAQARGVTMLACAHNGKPVYEYTPLQVKQGVVGYGRADKAQVQQMVTSFLSLKKVPKPDDVADALAVAICHAHSNKLEKTLKNIGGKYV.

Residues Asp7, Glu67, and Asp140 contribute to the active site. Asp7, Glu67, and Asp140 together coordinate Mg(2+).

Belongs to the RuvC family. In terms of assembly, homodimer which binds Holliday junction (HJ) DNA. The HJ becomes 2-fold symmetrical on binding to RuvC with unstacked arms; it has a different conformation from HJ DNA in complex with RuvA. In the full resolvosome a probable DNA-RuvA(4)-RuvB(12)-RuvC(2) complex forms which resolves the HJ. It depends on Mg(2+) as a cofactor.

The protein resides in the cytoplasm. It carries out the reaction Endonucleolytic cleavage at a junction such as a reciprocal single-stranded crossover between two homologous DNA duplexes (Holliday junction).. In terms of biological role, the RuvA-RuvB-RuvC complex processes Holliday junction (HJ) DNA during genetic recombination and DNA repair. Endonuclease that resolves HJ intermediates. Cleaves cruciform DNA by making single-stranded nicks across the HJ at symmetrical positions within the homologous arms, yielding a 5'-phosphate and a 3'-hydroxyl group; requires a central core of homology in the junction. The consensus cleavage sequence is 5'-(A/T)TT(C/G)-3'. Cleavage occurs on the 3'-side of the TT dinucleotide at the point of strand exchange. HJ branch migration catalyzed by RuvA-RuvB allows RuvC to scan DNA until it finds its consensus sequence, where it cleaves and resolves the cruciform DNA. This is Crossover junction endodeoxyribonuclease RuvC from Clostridioides difficile (strain 630) (Peptoclostridium difficile).